Consider the following 127-residue polypeptide: Large ribosomal subunit protein bL12 (127 aa).

It belongs to the bacterial ribosomal protein bL12 family. In terms of assembly, homodimer. Part of the ribosomal stalk of the 50S ribosomal subunit. Forms a multimeric L10(L12)X complex, where L10 forms an elongated spine to which 2 to 4 L12 dimers bind in a sequential fashion. Binds GTP-bound translation factors.

In terms of biological role, forms part of the ribosomal stalk which helps the ribosome interact with GTP-bound translation factors. Is thus essential for accurate translation. The chain is Large ribosomal subunit protein bL12 from Streptomyces coelicolor (strain ATCC BAA-471 / A3(2) / M145).